The chain runs to 212 residues: uncharacterized protein (212 aa).

The 118-residue stretch at 29 to 146 (KGKAGEKLVK…AAFHPKCSLK (118 aa)) folds into the NERD domain.

This is an uncharacterized protein from Bacillus anthracis.